A 307-amino-acid polypeptide reads, in one-letter code: Olfactory receptor 5M3 (307 aa).

Residues 1-23 lie on the Extracellular side of the membrane; it reads MLNFTDVTEFILLGLTSRREWQV. A glycan (N-linked (GlcNAc...) asparagine) is linked at Asn-3. A helical membrane pass occupies residues 24–44; the sequence is LFFIIFLVVYIITMVGNIGMM. Residues 45–52 are Cytoplasmic-facing; sequence VLIKVSPQ. The chain crosses the membrane as a helical span at residues 53–73; it reads LNNPMYFFLSHLSFVDVWFSS. The Extracellular segment spans residues 74 to 97; it reads NVTPKMLENLLSDKKTITYAGCLV. An intrachain disulfide couples Cys-95 to Cys-187. Residues 98–118 form a helical membrane-spanning segment; it reads QCFFFIALVHVEIFILAAMAF. Topologically, residues 119–137 are cytoplasmic; sequence DRYMAIGNPLLYGSKMSRV. A helical membrane pass occupies residues 138-158; sequence VCIRLITFPYIYGFLTSLAAT. Over 159–194 the chain is Extracellular; sequence LWTYGLYFCGKIEINHFYCADPPLIKMACAGTFVKE. The chain crosses the membrane as a helical span at residues 195 to 215; sequence YTMIILAGINFTYSLTVIIIS. Topologically, residues 216 to 235 are cytoplasmic; it reads YLFILIAILRMRSAEGRQKA. A helical transmembrane segment spans residues 236–256; the sequence is FSTCGSHLTAVIIFYGTLIFM. Topologically, residues 257–269 are extracellular; it reads YLRRPTEESVEQG. A helical membrane pass occupies residues 270–290; sequence KMVAVFYTTVIPMLNPMIYSL. Topologically, residues 291-307 are cytoplasmic; sequence RNKDVKKAMMKVISRSC.

This sequence belongs to the G-protein coupled receptor 1 family.

It localises to the cell membrane. In terms of biological role, odorant receptor. This is Olfactory receptor 5M3 (OR5M3) from Homo sapiens (Human).